Here is a 231-residue protein sequence, read N- to C-terminus: ATP-dependent dethiobiotin synthetase BioD 2 (231 aa).

13-18 (SVGKTV) contributes to the ATP binding site. Threonine 17 contributes to the Mg(2+) binding site. Lysine 38 is an active-site residue. Residues aspartate 55, 112 to 115 (EGTG), 172 to 173 (NR), 201 to 203 (PYL), and glutamine 208 contribute to the ATP site. Mg(2+) contacts are provided by aspartate 55 and glutamate 112.

It belongs to the dethiobiotin synthetase family. Homodimer. Mg(2+) serves as cofactor.

It is found in the cytoplasm. It catalyses the reaction (7R,8S)-7,8-diammoniononanoate + CO2 + ATP = (4R,5S)-dethiobiotin + ADP + phosphate + 3 H(+). Its pathway is cofactor biosynthesis; biotin biosynthesis; biotin from 7,8-diaminononanoate: step 1/2. Its function is as follows. Catalyzes a mechanistically unusual reaction, the ATP-dependent insertion of CO2 between the N7 and N8 nitrogen atoms of 7,8-diaminopelargonic acid (DAPA, also called 7,8-diammoniononanoate) to form a ureido ring. The polypeptide is ATP-dependent dethiobiotin synthetase BioD 2 (Salmonella typhimurium (strain LT2 / SGSC1412 / ATCC 700720)).